Reading from the N-terminus, the 629-residue chain is tRNA uridine 5-carboxymethylaminomethyl modification enzyme MnmG (629 aa).

FAD is bound by residues 13–18, V125, and S180; that span reads GGGHAG. NAD(+) is bound at residue 273-287; sequence GPRYCPSIEDKVMRF. Q370 serves as a coordination point for FAD.

The protein belongs to the MnmG family. As to quaternary structure, homodimer. Heterotetramer of two MnmE and two MnmG subunits. It depends on FAD as a cofactor.

Its subcellular location is the cytoplasm. NAD-binding protein involved in the addition of a carboxymethylaminomethyl (cmnm) group at the wobble position (U34) of certain tRNAs, forming tRNA-cmnm(5)s(2)U34. This chain is tRNA uridine 5-carboxymethylaminomethyl modification enzyme MnmG, found in Salmonella paratyphi A (strain ATCC 9150 / SARB42).